Here is a 38-residue protein sequence, read N- to C-terminus: Beta-defensin 1 (38 aa).

Intrachain disulfides connect C5–C34, C12–C27, and C17–C35.

The protein belongs to the beta-defensin family. In terms of assembly, monomer. Homodimer. Neutrophilic granules.

The protein resides in the secreted. It localises to the membrane. In terms of biological role, has bactericidal activity. Active against E.coli ML35 but not against S.aureus 502A. May act as a ligand for C-C chemokine receptor CCR6. Positively regulates the sperm motility and bactericidal activity in a CCR6-dependent manner. Binds to CCR6 and triggers Ca2+ mobilization in the sperm which is important for its motility. This chain is Beta-defensin 1 (DEFB1), found in Bos taurus (Bovine).